The following is a 1095-amino-acid chain: Tyrosine-sulfated glycopeptide receptor 1 (1095 aa).

Residues 23-43 form a helical membrane-spanning segment; it reads PHMVLFVLLYVLSISVFFLTV. N-linked (GlcNAc...) asparagine glycosylation is found at asparagine 62 and asparagine 73. 19 LRR repeats span residues 91–115, 116–139, 141–165, 170–195, 197–221, 223–246, 247–270, 271–294, 295–318, 320–342, 344–366, 367–391, 393–415, 416–439, 441–466, 470–494, 495–517, 518–542, and 566–589; these read ENRV…VLDL, QRLS…FLSA, DQLL…SFGN, IFPI…VFLQ, AFNL…MCTA, PQLT…LSRC, SRLS…IYNL, PELE…ITRL, TKLT…IGKL, KLSS…LANC, KLVK…DFSR, FQSL…VYSC, MMTA…VLEL, ESLS…SILQ, CKKL…DFLR, FPSL…LIKL, QRVE…WLGT, LPDL…LFQL, and NPNN…IYIK. An N-linked (GlcNAc...) asparagine glycan is attached at asparagine 165. 3 N-linked (GlcNAc...) asparagine glycosylation sites follow: asparagine 199, asparagine 204, and asparagine 207. Asparagine 258 carries N-linked (GlcNAc...) asparagine glycosylation. Residue asparagine 341 is glycosylated (N-linked (GlcNAc...) asparagine). The N-linked (GlcNAc...) asparagine glycan is linked to asparagine 377. An N-linked (GlcNAc...) asparagine glycan is attached at asparagine 430. N-linked (GlcNAc...) asparagine glycans are attached at residues asparagine 569, asparagine 592, asparagine 616, asparagine 627, asparagine 640, asparagine 662, and asparagine 714. 3 LRR repeats span residues 604–628, 629–652, and 654–677; these read LKVL…LSNL, TNLE…LTGL, and FLSY…QFDT. The helical transmembrane segment at 721–741 threads the bilayer; the sequence is LVLGLFFGVSLILVLLALLVL. Residues threonine 792 and threonine 800 each carry the phosphothreonine modification. The 272-residue stretch at 803 to 1074 folds into the Protein kinase domain; sequence FSQANIIGCG…PNIQQVVDWL (272 aa). ATP-binding positions include 809–817 and lysine 831; that span reads IGCGGFGLV. 2 positions are modified to phosphotyrosine: tyrosine 876 and tyrosine 916. Catalysis depends on aspartate 929, which acts as the Proton acceptor. Tyrosine 971 is modified (phosphotyrosine).

Belongs to the protein kinase superfamily. Ser/Thr protein kinase family. In terms of assembly, homo- and heterodimers with PSKR1. Interacts (via C-terminus) with AHA1 and AHA2 (via the R-domain). In terms of processing, autophosphorylated. Expressed ubiquitously, including in the shoot apical meristem and in the elongation zone of the root meristem.

It is found in the cell membrane. It carries out the reaction L-seryl-[protein] + ATP = O-phospho-L-seryl-[protein] + ADP + H(+). The catalysed reaction is L-threonyl-[protein] + ATP = O-phospho-L-threonyl-[protein] + ADP + H(+). Its function is as follows. Tyrosine-sulfated glycopeptide receptor with a serine/threonine-protein kinase activity. Regulates, in response to tyrosine-sulfated glycopeptide binding, a signaling cascade involved in cellular proliferation and plant growth. Not involved in PSK perception. Involved in plant immunity, with antagonistic effects on bacterial and fungal resistances. Mediates activation of the plasma membrane H(+)-ATPase by PSY1. Phosphorylates AHA2 at Thr-881. The polypeptide is Tyrosine-sulfated glycopeptide receptor 1 (Arabidopsis thaliana (Mouse-ear cress)).